An 83-amino-acid polypeptide reads, in one-letter code: RNA-binding protein Hfq (83 aa).

The 60-residue stretch at 9-68 folds into the Sm domain; it reads DPYLNALRKERIPVSIFLVNGIKLQGQIESFDQFVILLKNTVSQMVYKHAISTVVPARNV.

Belongs to the Hfq family. In terms of assembly, homohexamer.

Functionally, RNA chaperone that binds small regulatory RNA (sRNAs) and mRNAs to facilitate mRNA translational regulation in response to envelope stress, environmental stress and changes in metabolite concentrations. Also binds with high specificity to tRNAs. In Hahella chejuensis (strain KCTC 2396), this protein is RNA-binding protein Hfq.